A 386-amino-acid polypeptide reads, in one-letter code: FHA domain-containing protein At4g14490 (386 aa).

The 51-residue stretch at 28 to 78 folds into the FHA domain; it reads IRVGRIVRGNEIAIKDAGISTKHLRIESDSGNWVIQDLGSSNGTLLNSNAL. A disordered region spans residues 286-311; that stretch reads KNKGKNKKADQKPLKSFENDEVTDSG. Residues 292-303 are compositionally biased toward basic and acidic residues; that stretch reads KKADQKPLKSFE.

The polypeptide is FHA domain-containing protein At4g14490 (Arabidopsis thaliana (Mouse-ear cress)).